We begin with the raw amino-acid sequence, 524 residues long: MEAPPDPRPHASAAAPLRAPEVARLREEQEKVVTNCQEKIQHWKKVDNDYNALQERLSTLPDKLSYNIMVPFGPFAFMPGKLVHTNEVTVLLGDNWFAKCSAKQAVGLVEHRKEHVRKTIDDLKKVMKNFESRVEFTEDLQKMSDAAGDIVDIREEIKTDFEFKAKHRIAHKPHSKPKTSDIFEAEFANDLKSKDLLADKELWDRLEELERQEELLGEIDIDSKPDTVIANGEDVSSEEEKEDQNINVNMMHQVTDSLALSSCYNSLTNSELFNGQVNSPLNYSVNGSSSYHSNEDDGDNNDDGGDSENDHDTLGVEDNSIPTIYFSHTVEPKRVRINTGKNTTLKFSEKKEEAKRKRKNSSGSGHSPQELPMIRTPADIYRVFVDVVNGEYVPRKSILKSRSRENSVCSDTSESSAADFDDRRGVLRSISCEEATCSDASESILEEEQENHQKKLLPLSVTPEAFSGTVIEKEFLSPSLTPHPAMAHPVLPTIPERKEVLSEVSEGTTKRVSKFKAARLQQKN.

3 disordered regions span residues 1-20 (MEAP…LRAP), 284-320 (SVNG…EDNS), and 335-373 (VRIN…ELPM). The segment covering 296-307 (DDGDNNDDGGDS) has biased composition (acidic residues). S361 bears the Phosphoserine; by RPS6KB1 mark. The residue at position 431 (S431) is a Phosphoserine.

Belongs to the RNA polymerase II subunit 5-mediating protein family. Homodimer. Component of the PAQosome complex which is responsible for the biogenesis of several protein complexes and which consists of R2TP complex members RUVBL1, RUVBL2, RPAP3 and PIH1D1, URI complex members PFDN2, PFDN6, PDRG1, UXT and URI1 as well as ASDURF, POLR2E and DNAAF10/WDR92. Interacts with POLR2E/RPB5, RUVBL2 and RUVBL1. Interacts with PFDN2, PFDN4 and STAP1; the interactions are phosphorylation-dependent and occur in a growth-dependent manner in the mitochondrion. Interacts with UXT. Interacts with PPP1CC; the interaction is phosphorylation-dependent and occurs in a growth factor-dependent manner. Interacts (via the middle C-terminal region) with GTF2F1 and GTF2F2. Interacts with DMAP1. Interacts with TSC1 and TSC2. Interacts with PRPF8 and EFTUD2 in a ZNHIT2-dependent manner. Post-translationally, phosphorylated. Phosphorylation occurs essentially on serine residues. Phosphorylation occurs in response to androgen treatment in prostate cancer cells in a mTOR-dependent manner. Phosphorylated; hyperhosphorylated in mitochondria in a mTORC-dependent signaling pathway. Phosphorylated at Ser-361 by RPS6KB1 in a growth factor- and rapamycin-dependent manner. S6K1-mediated mitochondrial phosphorylation at Ser-361 disrupts the URI1-PPP1CC complex in the mitochondrion, relieves PPP1CC phosphatase inhibition activity and hence engages a negative feedback diminishing RPS6KB1 kinase activity, preventing sustained S6K1-dependent signaling.

It is found in the nucleus. It localises to the cytoplasm. Its subcellular location is the mitochondrion. The protein resides in the cell projection. The protein localises to the dendrite. In terms of biological role, involved in gene transcription regulation. Acts as a transcriptional repressor in concert with the corepressor UXT to regulate androgen receptor (AR) transcription. May act as a tumor suppressor to repress AR-mediated gene transcription and to inhibit anchorage-independent growth in prostate cancer cells. Required for cell survival in ovarian cancer cells. Together with UXT, associates with chromatin to the NKX3-1 promoter region. Plays a central role in maintaining S6K1 signaling and BAD phosphorylation under normal growth conditions thereby protecting cells from potential deleterious effects of sustained S6K1 signaling. The URI1-PPP1CC complex acts as a central component of a negative feedback mechanism that counteracts excessive S6K1 survival signaling to BAD in response to growth factors. Mediates inhibition of PPP1CC phosphatase activity in mitochondria. Coordinates the regulation of nutrient-sensitive gene expression availability in a mTOR-dependent manner. Seems to be a scaffolding protein able to assemble a prefoldin-like complex that contains PFDs and proteins with roles in transcription and ubiquitination. This is Unconventional prefoldin RPB5 interactor (URI1) from Bos taurus (Bovine).